The primary structure comprises 129 residues: Glycine cleavage system H protein (129 aa).

Residues 24–106 form the Lipoyl-binding domain; sequence LLKIGVSEFA…IGEGWLVILK (83 aa). The residue at position 65 (Lys65) is an N6-lipoyllysine.

The protein belongs to the GcvH family. As to quaternary structure, the glycine cleavage system is composed of four proteins: P, T, L and H. It depends on (R)-lipoate as a cofactor.

Functionally, the glycine cleavage system catalyzes the degradation of glycine. The H protein shuttles the methylamine group of glycine from the P protein to the T protein. This chain is Glycine cleavage system H protein, found in Prochlorococcus marinus (strain MIT 9312).